We begin with the raw amino-acid sequence, 152 residues long: MSNMYCGIGKVPKGKERGTPEHCFQSNQIRYYGIKKIDKSLLEKPKKKRLSLIKEQTKLNNLLEKGKRMVKEANKLKSIINDPESSKTEIRNAKKKLEKIVAKKNKFVLELKQQRQVVDELLEEEREKEKAERKAEKAKKNKKKSSTKTKKK.

A disordered region spans residues 127-152 (EKEKAERKAEKAKKNKKKSSTKTKKK). Residues 136–152 (EKAKKNKKKSSTKTKKK) are compositionally biased toward basic residues.

Belongs to the mimivirus R546 family.

This is an uncharacterized protein from Sputnik virophage.